Here is a 176-residue protein sequence, read N- to C-terminus: Disulfide bond formation protein B (176 aa).

Over M1–Q11 the chain is Cytoplasmic. Residues V12 to F28 traverse the membrane as a helical segment. At L29–I46 the chain is on the periplasmic side. Cysteines 38 and 41 form a disulfide. Residues G47–P63 form a helical membrane-spanning segment. Residues K64 to L70 lie on the Cytoplasmic side of the membrane. A helical membrane pass occupies residues L71 to G88. At R89–E145 the chain is on the periplasmic side. An intrachain disulfide couples C104 to C131. A helical membrane pass occupies residues Q146 to R164. Topologically, residues I165 to R176 are cytoplasmic.

It belongs to the DsbB family.

Its subcellular location is the cell inner membrane. Its function is as follows. Required for disulfide bond formation in some periplasmic proteins. Acts by oxidizing the DsbA protein. In Psychrobacter arcticus (strain DSM 17307 / VKM B-2377 / 273-4), this protein is Disulfide bond formation protein B.